Reading from the N-terminus, the 902-residue chain is Protein translocase subunit SecA (902 aa).

ATP-binding positions include Gln-87, Gly-105–Thr-109, and Asp-512. Positions Leu-851 to Gln-902 are disordered. Positions 886, 888, 897, and 898 each coordinate Zn(2+). The span at Lys-892–Gln-902 shows a compositional bias: basic residues.

Belongs to the SecA family. Monomer and homodimer. Part of the essential Sec protein translocation apparatus which comprises SecA, SecYEG and auxiliary proteins SecDF-YajC and YidC. It depends on Zn(2+) as a cofactor.

It localises to the cell inner membrane. The protein resides in the cytoplasm. It carries out the reaction ATP + H2O + cellular proteinSide 1 = ADP + phosphate + cellular proteinSide 2.. Its function is as follows. Part of the Sec protein translocase complex. Interacts with the SecYEG preprotein conducting channel. Has a central role in coupling the hydrolysis of ATP to the transfer of proteins into and across the cell membrane, serving both as a receptor for the preprotein-SecB complex and as an ATP-driven molecular motor driving the stepwise translocation of polypeptide chains across the membrane. This is Protein translocase subunit SecA from Sodalis glossinidius (strain morsitans).